Reading from the N-terminus, the 175-residue chain is Large ribosomal subunit protein uL6 (175 aa).

Belongs to the universal ribosomal protein uL6 family. As to quaternary structure, part of the 50S ribosomal subunit.

In terms of biological role, this protein binds to the 23S rRNA, and is important in its secondary structure. It is located near the subunit interface in the base of the L7/L12 stalk, and near the tRNA binding site of the peptidyltransferase center. The chain is Large ribosomal subunit protein uL6 from Xanthomonas axonopodis pv. citri (strain 306).